The sequence spans 120 residues: Ribonuclease P protein component 2 (120 aa).

This sequence belongs to the eukaryotic/archaeal RNase P protein component 2 family. In terms of assembly, consists of a catalytic RNA component and at least 4-5 protein subunits.

Its subcellular location is the cytoplasm. It carries out the reaction Endonucleolytic cleavage of RNA, removing 5'-extranucleotides from tRNA precursor.. Its function is as follows. Part of ribonuclease P, a protein complex that generates mature tRNA molecules by cleaving their 5'-ends. The polypeptide is Ribonuclease P protein component 2 (Thermococcus gammatolerans (strain DSM 15229 / JCM 11827 / EJ3)).